The sequence spans 153 residues: Subtilisin propeptide-like protein (153 aa).

Positions 1–27 (MKFLFAFNFFSLYIYLYEFLCIHLCGS) are cleaved as a signal peptide. Residues 127-153 (QISHLSEFIQYLLNKNVCIEFNQNVML) form a dispensable for parasite growth in host erythrocytes region.

The protein resides in the secreted. The protein localises to the parasitophorous vacuole lumen. It is found in the cell membrane. In terms of biological role, acts as a specific inhibitor of subtilisin-like protease SUB1. This Plasmodium falciparum (isolate 3D7) protein is Subtilisin propeptide-like protein.